A 266-amino-acid chain; its full sequence is Apolipoprotein A-I (266 aa).

The first 18 residues, 1–18 (MKAALLTLAVLFLTGSQA), serve as a signal peptide directing secretion. Repeat copies occupy residues 67–88 (LKLL…EQIG) and 89–110 (PVTQ…QEMS). A 10 X approximate tandem repeats region spans residues 67-266 (LKLLDNWDSL…DEATKKLNAQ (200 aa)). Residue Met-109 is modified to Methionine sulfoxide. Residues 111–121 (KDLEEVKQKVQ) form a 3; half-length repeat. 5 consecutive repeat copies span residues 122–143 (PYLD…QKVA), 144–165 (PLGS…EKLS), 166–187 (PLAE…AQLA), 188–209 (PYSD…EGGG), and 210–231 (ASLA…EKAR). One copy of the 9; half-length repeat lies at 232 to 242 (PALEDLRQGLL). Residues 243–266 (PVLESFKVSLLAAIDEATKKLNAQ) form repeat 10.

Belongs to the apolipoprotein A1/A4/E family. As to quaternary structure, homodimer. Interacts with APOA1BP and CLU. Component of a sperm activating protein complex (SPAP), consisting of APOA1, an immunoglobulin heavy chain, an immunoglobulin light chain and albumin. Interacts with NDRG1. Interacts with SCGB3A2. Interacts with NAXE and YJEFN3. Post-translationally, palmitoylated. Glycosylated. In terms of processing, phosphorylation sites are present in the extracellular medium. In terms of tissue distribution, major protein of plasma HDL, also found in chylomicrons. Synthesized in the liver and small intestine.

Its subcellular location is the secreted. Participates in the reverse transport of cholesterol from tissues to the liver for excretion by promoting cholesterol efflux from tissues and by acting as a cofactor for the lecithin cholesterol acyltransferase (LCAT). As part of the SPAP complex, activates spermatozoa motility. In Canis lupus familiaris (Dog), this protein is Apolipoprotein A-I (APOA1).